The sequence spans 677 residues: Elongation factor G 2 (677 aa).

The tr-type G domain occupies 8–283 (SRIRNIGIIA…AVVNFLPSPE (276 aa)). GTP is bound by residues 17 to 24 (AHIDAGKT), 81 to 85 (DTPGH), and 135 to 138 (NKMD).

It belongs to the TRAFAC class translation factor GTPase superfamily. Classic translation factor GTPase family. EF-G/EF-2 subfamily.

Its subcellular location is the cytoplasm. Catalyzes the GTP-dependent ribosomal translocation step during translation elongation. During this step, the ribosome changes from the pre-translocational (PRE) to the post-translocational (POST) state as the newly formed A-site-bound peptidyl-tRNA and P-site-bound deacylated tRNA move to the P and E sites, respectively. Catalyzes the coordinated movement of the two tRNA molecules, the mRNA and conformational changes in the ribosome. This Syntrophus aciditrophicus (strain SB) protein is Elongation factor G 2.